Consider the following 155-residue polypeptide: Protein FAM162A (155 aa).

The required for proapoptotic activity stretch occupies residues 77–103 (RFKKEEEIPETISFEMLDAAKNKIRVK). A helical transmembrane segment spans residues 102 to 121 (VKVSYLMIALTVAGCVYMVI).

It belongs to the UPF0389 family. As to quaternary structure, interacts with HSP90AB1; HSP90AB1 is essential for FAM162A mitochondrial localization and pro-apoptotic activity. Interacts with VDAC2; the interaction is probably involved in inducing mitochondrial permeability transition.

The protein resides in the mitochondrion membrane. Its function is as follows. Proposed to be involved in regulation of apoptosis; the exact mechanism may differ between cell types/tissues. May be involved in hypoxia-induced cell death of transformed cells implicating cytochrome C release and caspase activation (such as CASP9) and inducing mitochondrial permeability transition. May be involved in hypoxia-induced cell death of neuronal cells probably by promoting release of AIFM1 from mitochondria to cytoplasm and its translocation to the nucleus; however, the involvement of caspases has been reported conflictingly. The protein is Protein FAM162A (Fam162a) of Rattus norvegicus (Rat).